Reading from the N-terminus, the 135-residue chain is Photosystem II extrinsic protein U (135 aa).

The N-terminal stretch at 1-26 (MKNLVRLLAVIALIIGSFWGKVPAQA) is a signal peptide.

The protein belongs to the PsbU family. In terms of assembly, PSII is composed of 1 copy each of membrane proteins PsbA, PsbB, PsbC, PsbD, PsbE, PsbF, PsbH, PsbI, PsbJ, PsbK, PsbL, PsbM, PsbT, PsbX, PsbY, PsbZ, Psb30/Ycf12, peripheral proteins PsbO, CyanoQ (PsbQ), PsbU, PsbV and a large number of cofactors. It forms dimeric complexes.

It localises to the cellular thylakoid membrane. Functionally, one of the extrinsic, lumenal subunits of photosystem II (PSII). PSII is a light-driven water plastoquinone oxidoreductase, using light energy to abstract electrons from H(2)O, generating a proton gradient subsequently used for ATP formation. The extrinsic proteins stabilize the structure of photosystem II oxygen-evolving complex (OEC), the ion environment of oxygen evolution and protect the OEC against heat-induced inactivation. This is Photosystem II extrinsic protein U from Microcystis aeruginosa (strain NIES-843 / IAM M-2473).